The primary structure comprises 632 residues: DNA mismatch repair protein MutL (632 aa).

The protein belongs to the DNA mismatch repair MutL/HexB family.

This protein is involved in the repair of mismatches in DNA. It is required for dam-dependent methyl-directed DNA mismatch repair. May act as a 'molecular matchmaker', a protein that promotes the formation of a stable complex between two or more DNA-binding proteins in an ATP-dependent manner without itself being part of a final effector complex. The protein is DNA mismatch repair protein MutL of Pseudomonas putida (strain GB-1).